Consider the following 196-residue polypeptide: UMP-CMP kinase (196 aa).

Residue 13 to 18 participates in ATP binding; sequence GAGKGT. A Phosphoserine modification is found at Ser33. Positions 33 to 63 are NMP; the sequence is SAGELLRDERKNPDSQYGELIEKYIKDGKIV. Arg39 provides a ligand contact to a ribonucleoside 5'-phosphate. Residues Lys43 and Lys55 each carry the N6-acetyllysine modification. A ribonucleoside 5'-phosphate-binding positions include 61 to 63 and 93 to 96; these read KIV and GFPR. Asn100 contacts CMP. Lys106 is subject to N6-succinyllysine. The tract at residues 133-143 is LID; that stretch reads ERGKSSGRSDD. ATP is bound at residue Arg134. 2 residues coordinate a ribonucleoside 5'-phosphate: Arg140 and Arg151. Lys179 provides a ligand contact to ATP. At Ser180 the chain carries Phosphoserine.

This sequence belongs to the adenylate kinase family. UMP-CMP kinase subfamily. Monomer. The cofactor is Mg(2+).

The protein localises to the nucleus. Its subcellular location is the cytoplasm. It catalyses the reaction CMP + ATP = CDP + ADP. It carries out the reaction dCMP + ATP = dCDP + ADP. The catalysed reaction is UMP + ATP = UDP + ADP. The enzyme catalyses a 2'-deoxyribonucleoside 5'-diphosphate + ATP = a 2'-deoxyribonucleoside 5'-triphosphate + ADP. It catalyses the reaction a ribonucleoside 5'-diphosphate + ATP = a ribonucleoside 5'-triphosphate + ADP. Its function is as follows. Catalyzes the phosphorylation of pyrimidine nucleoside monophosphates at the expense of ATP. Plays an important role in de novo pyrimidine nucleotide biosynthesis. Has preference for UMP and CMP as phosphate acceptors. Also displays broad nucleoside diphosphate kinase activity. This Sus scrofa (Pig) protein is UMP-CMP kinase.